The sequence spans 355 residues: Phosphoserine aminotransferase (355 aa).

Residue R41 coordinates L-glutamate. Pyridoxal 5'-phosphate is bound by residues 75-76 (AS), W99, T147, D166, and Q189. Position 190 is an N6-(pyridoxal phosphate)lysine (K190). Residue 231–232 (NT) coordinates pyridoxal 5'-phosphate.

Belongs to the class-V pyridoxal-phosphate-dependent aminotransferase family. SerC subfamily. In terms of assembly, homodimer. Requires pyridoxal 5'-phosphate as cofactor.

The protein localises to the cytoplasm. It carries out the reaction O-phospho-L-serine + 2-oxoglutarate = 3-phosphooxypyruvate + L-glutamate. It catalyses the reaction 4-(phosphooxy)-L-threonine + 2-oxoglutarate = (R)-3-hydroxy-2-oxo-4-phosphooxybutanoate + L-glutamate. The protein operates within amino-acid biosynthesis; L-serine biosynthesis; L-serine from 3-phospho-D-glycerate: step 2/3. It functions in the pathway cofactor biosynthesis; pyridoxine 5'-phosphate biosynthesis; pyridoxine 5'-phosphate from D-erythrose 4-phosphate: step 3/5. Catalyzes the reversible conversion of 3-phosphohydroxypyruvate to phosphoserine and of 3-hydroxy-2-oxo-4-phosphonooxybutanoate to phosphohydroxythreonine. This chain is Phosphoserine aminotransferase, found in Bacteroides fragilis (strain ATCC 25285 / DSM 2151 / CCUG 4856 / JCM 11019 / LMG 10263 / NCTC 9343 / Onslow / VPI 2553 / EN-2).